Here is a 600-residue protein sequence, read N- to C-terminus: Elongation factor 4 (600 aa).

A tr-type G domain is found at 5-187 (KYIRNFSIVA…EIVEKIPAPE (183 aa)). GTP contacts are provided by residues 17-22 (DHGKST) and 134-137 (NKVD).

This sequence belongs to the TRAFAC class translation factor GTPase superfamily. Classic translation factor GTPase family. LepA subfamily.

It is found in the cell membrane. The enzyme catalyses GTP + H2O = GDP + phosphate + H(+). In terms of biological role, required for accurate and efficient protein synthesis under certain stress conditions. May act as a fidelity factor of the translation reaction, by catalyzing a one-codon backward translocation of tRNAs on improperly translocated ribosomes. Back-translocation proceeds from a post-translocation (POST) complex to a pre-translocation (PRE) complex, thus giving elongation factor G a second chance to translocate the tRNAs correctly. Binds to ribosomes in a GTP-dependent manner. This chain is Elongation factor 4, found in Clostridium perfringens (strain 13 / Type A).